A 172-amino-acid polypeptide reads, in one-letter code: Protein LHCP TRANSLOCATION DEFECT (172 aa).

A chloroplast-targeting transit peptide spans M1–R28. An ANK repeat occupies P114 to V146.

It is found in the plastid. Its subcellular location is the chloroplast. In terms of biological role, involved in the import of light-harvesting complex proteins (LHCP) and subsequent routing of these proteins to the chloroplast signal recognition particle (SRP) pathway. This Oryza sativa subsp. indica (Rice) protein is Protein LHCP TRANSLOCATION DEFECT (LTD).